Consider the following 162-residue polypeptide: Thy-1 membrane glycoprotein (162 aa).

Positions 1–19 are cleaved as a signal peptide; sequence MNPAISVALLLSVLQVSRG. Q20 is subject to Pyrrolidone carboxylic acid. Residues 20–127 enclose the Ig-like V-type domain; it reads QKVTSLTACL…NKSISVYRDK (108 aa). 2 cysteine pairs are disulfide-bonded: C28–C131 and C38–C105. N-linked (GlcNAc...) asparagine glycans are attached at residues N42, N94, and N118. Residue C131 is the site of GPI-anchor amidated cysteine; alternate attachment. A propeptide spans 132–162 (removed in mature form); sequence GGISLLVQNTSWMLLLLLSLSLLQALDFISL.

It is found in the cell membrane. In terms of biological role, may play a role in cell-cell or cell-ligand interactions during synaptogenesis and other events in the brain. This chain is Thy-1 membrane glycoprotein (Thy1), found in Mus musculus (Mouse).